Here is a 144-residue protein sequence, read N- to C-terminus: UPF0735 ACT domain-containing protein NT01CX_1681 (144 aa).

The ACT domain occupies 68 to 143 (TIGFLLSHKA…NVVKVSLIAM (76 aa)).

The protein belongs to the UPF0735 family.

This chain is UPF0735 ACT domain-containing protein NT01CX_1681, found in Clostridium novyi (strain NT).